Here is a 594-residue protein sequence, read N- to C-terminus: Alpha-1,4-glucan:maltose-1-phosphate maltosyltransferase (594 aa).

The disordered stretch occupies residues 244-270 (NRKGRNNSLTPGPDDPGSPYAIGSEEG). Residues lysine 246, glutamine 306, and aspartate 341 each contribute to the alpha-maltose 1-phosphate site. Aspartate 377 (nucleophile) is an active-site residue. Asparagine 378 serves as a coordination point for alpha-maltose 1-phosphate. The Proton donor role is filled by glutamate 406. 517–518 (KY) provides a ligand contact to alpha-maltose 1-phosphate.

The protein belongs to the glycosyl hydrolase 13 family. GlgE subfamily. Homodimer.

It carries out the reaction alpha-maltose 1-phosphate + [(1-&gt;4)-alpha-D-glucosyl](n) = [(1-&gt;4)-alpha-D-glucosyl](n+2) + phosphate. Maltosyltransferase that uses maltose 1-phosphate (M1P) as the sugar donor to elongate linear or branched alpha-(1-&gt;4)-glucans. Is involved in a branched alpha-glucan biosynthetic pathway from trehalose, together with TreS, Mak and GlgB. The polypeptide is Alpha-1,4-glucan:maltose-1-phosphate maltosyltransferase (Cereibacter sphaeroides (Rhodobacter sphaeroides)).